We begin with the raw amino-acid sequence, 351 residues long: Dihydroorotate dehydrogenase (quinone) (351 aa).

FMN-binding positions include Ala67–Lys71 and Thr91. Lys71 lines the substrate pocket. Asn116–Phe120 contacts substrate. Asn145 and Asn178 together coordinate FMN. Residue Asn178 coordinates substrate. The active-site Nucleophile is Ser181. Asn183 is a substrate binding site. Residues Lys214 and Thr242 each contribute to the FMN site. Substrate is bound at residue Asn243–Thr244. FMN is bound by residues Gly262, Gly291, and Tyr312–Ser313.

Belongs to the dihydroorotate dehydrogenase family. Type 2 subfamily. Monomer. Requires FMN as cofactor.

It is found in the cell membrane. The enzyme catalyses (S)-dihydroorotate + a quinone = orotate + a quinol. The protein operates within pyrimidine metabolism; UMP biosynthesis via de novo pathway; orotate from (S)-dihydroorotate (quinone route): step 1/1. In terms of biological role, catalyzes the conversion of dihydroorotate to orotate with quinone as electron acceptor. The chain is Dihydroorotate dehydrogenase (quinone) from Helicobacter pylori (strain HPAG1).